A 528-amino-acid chain; its full sequence is Phosphoenolpyruvate carboxykinase (ATP) (528 aa).

Arginine 54, tyrosine 190, and lysine 196 together coordinate substrate. Residues lysine 196, histidine 215, and 231-239 (GLSGTGKTT) contribute to the ATP site. Mn(2+) contacts are provided by lysine 196 and histidine 215. A Mn(2+)-binding site is contributed by aspartate 252. ATP contacts are provided by glutamate 280, arginine 316, and threonine 441. A substrate-binding site is contributed by arginine 316.

This sequence belongs to the phosphoenolpyruvate carboxykinase (ATP) family. It depends on Mn(2+) as a cofactor.

Its subcellular location is the cytoplasm. It carries out the reaction oxaloacetate + ATP = phosphoenolpyruvate + ADP + CO2. The protein operates within carbohydrate biosynthesis; gluconeogenesis. Involved in the gluconeogenesis. Catalyzes the conversion of oxaloacetate (OAA) to phosphoenolpyruvate (PEP) through direct phosphoryl transfer between the nucleoside triphosphate and OAA. The protein is Phosphoenolpyruvate carboxykinase (ATP) of Sulfurimonas denitrificans (strain ATCC 33889 / DSM 1251) (Thiomicrospira denitrificans (strain ATCC 33889 / DSM 1251)).